Reading from the N-terminus, the 422-residue chain is Ameloblastin (422 aa).

Residues 1–26 (MSASKIPLFKMKGLLLFLSLVKMSLA) form the signal peptide. Position 42 is a hydroxyproline (Pro42). Ser48 carries the post-translational modification Phosphoserine. An O-linked (GalNAc...) serine glycan is attached at Ser117. A disordered region spans residues 271 to 321 (GLNQNSPKGGDFTVEVDSPVSVTKGPEKGEGPEGSPLQEASPDKGENPALL).

Belongs to the ameloblastin family. As to expression, ameloblast-specific.

Its subcellular location is the secreted. It is found in the extracellular space. The protein localises to the extracellular matrix. Its function is as follows. Involved in the mineralization and structural organization of enamel. The sequence is that of Ameloblastin (Ambn) from Rattus norvegicus (Rat).